A 275-amino-acid chain; its full sequence is Hydroxyethylthiazole kinase (275 aa).

Methionine 50 provides a ligand contact to substrate. Arginine 126 and serine 171 together coordinate ATP. Alanine 200 is a substrate binding site.

It belongs to the Thz kinase family. It depends on Mg(2+) as a cofactor.

It catalyses the reaction 5-(2-hydroxyethyl)-4-methylthiazole + ATP = 4-methyl-5-(2-phosphooxyethyl)-thiazole + ADP + H(+). Its pathway is cofactor biosynthesis; thiamine diphosphate biosynthesis; 4-methyl-5-(2-phosphoethyl)-thiazole from 5-(2-hydroxyethyl)-4-methylthiazole: step 1/1. Catalyzes the phosphorylation of the hydroxyl group of 4-methyl-5-beta-hydroxyethylthiazole (THZ). The sequence is that of Hydroxyethylthiazole kinase from Acinetobacter baumannii (strain SDF).